A 509-amino-acid chain; its full sequence is Solute carrier family 2, facilitated glucose transporter member 4 (509 aa).

The Cytoplasmic segment spans residues 1–24 (MPSGFQQIGSEDGEPPRQRVTGTL). Positions 7–13 (QIGSEDG) are interaction with SRFBP1. Ser10 bears the Phosphoserine mark. The chain crosses the membrane as a helical span at residues 25-45 (VLAVFSAVLGSLQFGYNIGVI). At 46-81 (NAPQKVIEQSYNETWLGRQGPEGPGSIPPGTLTTLW) the chain is on the extracellular side. The N-linked (GlcNAc...) asparagine glycan is linked to Asn57. A helical transmembrane segment spans residues 82 to 102 (ALSVAIFSVGGMISSFLIGII). At 103–111 (SQWLGRKRA) the chain is on the cytoplasmic side. The helical transmembrane segment at 112 to 132 (MLFNNALAVLGGTLMGLAKAA) threads the bilayer. Topologically, residues 133–142 (ASYEMLILGR) are extracellular. A helical membrane pass occupies residues 143–163 (FFIGAYSGLTSGLVPMYVGEI). At 164-171 (APTHLRGA) the chain is on the cytoplasmic side. A helical transmembrane segment spans residues 172-192 (LGTLNQLAIVTGILIAQVLGL). Gln177 serves as a coordination point for D-glucose. The Extracellular portion of the chain corresponds to 193-200 (ESMLGTAT). A helical transmembrane segment spans residues 201 to 221 (LWPLLLGITVLPALLQMVLLP). Residues 222-287 (LCPESPRYLY…LLGSHTHRQP (66 aa)) lie on the Cytoplasmic side of the membrane. The S-palmitoyl cysteine moiety is linked to residue Cys223. Phosphoserine; by SGK1 is present on Ser274. The chain crosses the membrane as a helical span at residues 288–308 (LVIAIVLQLSQQLSGINAVFY). Residues 298–299 (QQ) and Asn304 contribute to the D-glucose site. Over 309 to 323 (YSTSIFESAGVEKPA) the chain is Extracellular. Residues 324–344 (YATIGAGVVNTVFTLVSVFLV) traverse the membrane as a helical segment. D-glucose is bound at residue Asn333. The Cytoplasmic segment spans residues 345-353 (ERAGRRTLH). The chain crosses the membrane as a helical span at residues 354–374 (LLGLAGMCGCAILMTVALLLL). Residues 375 to 384 (ERVPAMSYVS) lie on the Extracellular side of the membrane. The helical transmembrane segment at 385–405 (IVAIFGFVAFFEIGPGPIPWF) threads the bilayer. D-glucose is bound by residues Glu396 and Trp404. The Cytoplasmic portion of the chain corresponds to 406-417 (IVAELFSQGPRP). Residues 418-438 (AAMAVAGFSNWTCNFIIGMGF) traverse the membrane as a helical segment. The Extracellular segment spans residues 439–445 (QYVADAM). A helical transmembrane segment spans residues 446–466 (GPYVFLLFAVLLLGFFIFTFL). Over 467–509 (KVPETRGRTFDQISAVFHRTPSLLEQEVKPSTELEYLGPDEHD) the chain is Cytoplasmic. Thr486 is subject to Phosphothreonine. Ser488 carries the post-translational modification Phosphoserine. Positions 489–490 (LL) match the Dileucine internalization motif motif.

The protein belongs to the major facilitator superfamily. Sugar transporter (TC 2.A.1.1) family. Glucose transporter subfamily. Binds to DAXX. Interacts via its N-terminus with SRFBP1. Interacts with NDUFA9. Interacts with TRARG1; the interaction is required for proper SLC2A4 recycling after insulin stimulation. Sumoylated. In terms of processing, palmitoylated. Palmitoylation by ZDHHC7 controls the insulin-dependent translocation of GLUT4 to the plasma membrane.

It is found in the cell membrane. The protein resides in the endomembrane system. It localises to the cytoplasm. The protein localises to the perinuclear region. The catalysed reaction is D-glucose(out) = D-glucose(in). Insulin-regulated facilitative glucose transporter, which plays a key role in removal of glucose from circulation. Response to insulin is regulated by its intracellular localization: in the absence of insulin, it is efficiently retained intracellularly within storage compartments in muscle and fat cells. Upon insulin stimulation, translocates from these compartments to the cell surface where it transports glucose from the extracellular milieu into the cell. In Bos taurus (Bovine), this protein is Solute carrier family 2, facilitated glucose transporter member 4.